Here is a 541-residue protein sequence, read N- to C-terminus: MAGTVDAQEHVAKPRRPNIFRVLRRTGYGKCLVCSLLLILCFFYATFCHVKHEAYSGSQPLLIYQHGPCAQGYNFVPIVFGLMLYIVYLMECWHSRTKIINMKKVRVEDALDYITALRTSPPIVWWKSVCYHYTRKTRQVTRYRNGDAVSATQVYYERMNSHQAGSMFIYDTCGFRDISKSILEVEKFHVTRIRLSRSFVFANMQAATEFEQQRSRFFNDNETKDDYMEVREGMDLSDVGFVEEILAFNKPTPPWFLHPIVFWFFSIFVLSWPLRIYTEWRTAVLSFQVIKLFGTNYLSPNSVNYTGPLTRTSTMDTVELEALLRREQHFVVPSYSEVMLMQNTIANSNTNYPNIRCLDPVILPRPFVSTTNEHIVLRNYGATETDNSLSEPITATPRPLRVSRSMTFAAQGNLEESAENLSCLENGSRANRAIPSSRRNLPLRSLSIGGISAWSNGYREIGNPDDSQLLIEPDEPPPPYEVALRMCAPLYERLRRSISSRLASISHSSSKDLKSLTLKSSSSNNNNNNSNNNNNDDPEHP.

3 helical membrane passes run 27 to 47 (GYGK…YATF), 73 to 93 (YNFV…MECW), and 254 to 274 (PWFL…SWPL). The interval 503–541 (ASISHSSSKDLKSLTLKSSSSNNNNNNSNNNNNDDPEHP) is disordered. A compositionally biased stretch (low complexity) spans 515-535 (SLTLKSSSSNNNNNNSNNNNN).

Belongs to the TMEM151 family.

Its subcellular location is the membrane. The protein is Transmembrane protein 151 homolog of Caenorhabditis elegans.